The following is a 1058-amino-acid chain: Carbamoyl phosphate synthase large chain (1058 aa).

A carboxyphosphate synthetic domain region spans residues 1–401; the sequence is MAKRTDIKKI…CLLKACRSLE (401 aa). ATP is bound by residues arginine 129, arginine 169, glycine 175, glycine 176, arginine 208, isoleucine 210, glutamate 215, glycine 241, isoleucine 242, histidine 243, glutamine 284, and glutamate 298. In terms of domain architecture, ATP-grasp 1 spans 133-327; sequence KQLMKELGEP…IAKIAAKIAV (195 aa). Residues glutamine 284, glutamate 298, and asparagine 300 each coordinate Mg(2+). Mn(2+) is bound by residues glutamine 284, glutamate 298, and asparagine 300. The segment at 402-546 is oligomerization domain; it reads IGVHHNELKG…YSTYEWENES (145 aa). Residues 547–929 form a carbamoyl phosphate synthetic domain region; it reads IKSEKESVIV…ALYKAFEASY (383 aa). Residues 671 to 861 form the ATP-grasp 2 domain; that stretch reads EKALKELGIP…MAQVATKLIL (191 aa). The ATP site is built by arginine 707, serine 746, isoleucine 748, glutamate 752, glycine 777, valine 778, histidine 779, serine 780, glutamine 820, and glutamate 832. 3 residues coordinate Mg(2+): glutamine 820, glutamate 832, and asparagine 834. Residues glutamine 820, glutamate 832, and asparagine 834 each coordinate Mn(2+). The MGS-like domain maps to 930–1058; it reads LHMPEYGTIV…ESRTFSIEAI (129 aa). The tract at residues 930-1058 is allosteric domain; the sequence is LHMPEYGTIV…ESRTFSIEAI (129 aa).

The protein belongs to the CarB family. Composed of two chains; the small (or glutamine) chain promotes the hydrolysis of glutamine to ammonia, which is used by the large (or ammonia) chain to synthesize carbamoyl phosphate. Tetramer of heterodimers (alpha,beta)4. Requires Mg(2+) as cofactor. It depends on Mn(2+) as a cofactor.

The enzyme catalyses hydrogencarbonate + L-glutamine + 2 ATP + H2O = carbamoyl phosphate + L-glutamate + 2 ADP + phosphate + 2 H(+). It carries out the reaction hydrogencarbonate + NH4(+) + 2 ATP = carbamoyl phosphate + 2 ADP + phosphate + 2 H(+). Its pathway is amino-acid biosynthesis; L-arginine biosynthesis; carbamoyl phosphate from bicarbonate: step 1/1. It participates in pyrimidine metabolism; UMP biosynthesis via de novo pathway; (S)-dihydroorotate from bicarbonate: step 1/3. Large subunit of the glutamine-dependent carbamoyl phosphate synthetase (CPSase). CPSase catalyzes the formation of carbamoyl phosphate from the ammonia moiety of glutamine, carbonate, and phosphate donated by ATP, constituting the first step of 2 biosynthetic pathways, one leading to arginine and/or urea and the other to pyrimidine nucleotides. The large subunit (synthetase) binds the substrates ammonia (free or transferred from glutamine from the small subunit), hydrogencarbonate and ATP and carries out an ATP-coupled ligase reaction, activating hydrogencarbonate by forming carboxy phosphate which reacts with ammonia to form carbamoyl phosphate. This Streptococcus equi subsp. equi (strain 4047) protein is Carbamoyl phosphate synthase large chain.